Consider the following 502-residue polypeptide: Bone morphogenetic protein receptor type-1B (502 aa).

The first 13 residues, M1 to T13, serve as a signal peptide directing secretion. The segment at M1–P25 is disordered. The Extracellular segment spans residues K14 to R126. 5 cysteine pairs are disulfide-bonded: C32/C53, C34/C38, C47/C71, C81/C95, and C96/C102. Residues A127 to F148 form a helical membrane-spanning segment. Residues R149–L502 are Cytoplasmic-facing. The 30-residue stretch at E174–Q203 folds into the GS domain. In terms of domain architecture, Protein kinase spans I204 to M494. ATP contacts are provided by residues I210–V218 and K231. D332 functions as the Proton acceptor in the catalytic mechanism.

It belongs to the protein kinase superfamily. TKL Ser/Thr protein kinase family. TGFB receptor subfamily. In terms of assembly, interacts with high affinity with GDF5; positively regulates chondrocyte differentiation. Interacts with SCUBE3. Interacts with TSC22D1/TSC-22. Interacts with TGFBR3. It depends on Mg(2+) as a cofactor. The cofactor is Mn(2+). Post-translationally, autophosphorylated.

It localises to the cell membrane. It catalyses the reaction L-threonyl-[receptor-protein] + ATP = O-phospho-L-threonyl-[receptor-protein] + ADP + H(+). It carries out the reaction L-seryl-[receptor-protein] + ATP = O-phospho-L-seryl-[receptor-protein] + ADP + H(+). On ligand binding, forms a receptor complex consisting of two type II and two type I transmembrane serine/threonine kinases. Type II receptors phosphorylate and activate type I receptors which autophosphorylate, then bind and activate SMAD transcriptional regulators. Receptor for BMP7/OP-1 and GDF5. Positively regulates chondrocyte differentiation through GDF5 interaction. This Homo sapiens (Human) protein is Bone morphogenetic protein receptor type-1B (BMPR1B).